A 654-amino-acid chain; its full sequence is Kelch-like protein 13 (654 aa).

A BTB domain is found at 91-160 (CDVTLMPGDT…IYTAKLSLNM (70 aa)). The region spanning 195–296 (CVEVGRIANT…TPQELINYVQ (102 aa)) is the BACK domain. 6 Kelch repeats span residues 340–388 (RLVT…VIGN), 389–440 (FLYV…ALKG), 441–487 (FLYA…VYGG), 489–534 (MYIS…TVGD), 536–586 (LYVI…VFEN), and 587–635 (KIYV…TLTV).

In terms of assembly, component of the BCR(KLHL9-KLHL13) E3 ubiquitin ligase complex, at least composed of CUL3, KLHL9, KLHL13 and RBX1. Interacts with AURKB.

It participates in protein modification; protein ubiquitination. Functionally, substrate-specific adapter of a BCR (BTB-CUL3-RBX1) E3 ubiquitin-protein ligase complex required for mitotic progression and cytokinesis. The BCR(KLHL9-KLHL13) E3 ubiquitin ligase complex mediates the ubiquitination of AURKB and controls the dynamic behavior of AURKB on mitotic chromosomes and thereby coordinates faithful mitotic progression and completion of cytokinesis. In Mus musculus (Mouse), this protein is Kelch-like protein 13 (Klhl13).